Consider the following 556-residue polypeptide: 2-succinyl-5-enolpyruvyl-6-hydroxy-3-cyclohexene-1-carboxylate synthase (556 aa).

Belongs to the TPP enzyme family. MenD subfamily. As to quaternary structure, homodimer. Requires Mg(2+) as cofactor. It depends on Mn(2+) as a cofactor. The cofactor is thiamine diphosphate.

The catalysed reaction is isochorismate + 2-oxoglutarate + H(+) = 5-enolpyruvoyl-6-hydroxy-2-succinyl-cyclohex-3-ene-1-carboxylate + CO2. It participates in quinol/quinone metabolism; 1,4-dihydroxy-2-naphthoate biosynthesis; 1,4-dihydroxy-2-naphthoate from chorismate: step 2/7. It functions in the pathway quinol/quinone metabolism; menaquinone biosynthesis. Catalyzes the thiamine diphosphate-dependent decarboxylation of 2-oxoglutarate and the subsequent addition of the resulting succinic semialdehyde-thiamine pyrophosphate anion to isochorismate to yield 2-succinyl-5-enolpyruvyl-6-hydroxy-3-cyclohexene-1-carboxylate (SEPHCHC). The polypeptide is 2-succinyl-5-enolpyruvyl-6-hydroxy-3-cyclohexene-1-carboxylate synthase (Klebsiella pneumoniae subsp. pneumoniae (strain ATCC 700721 / MGH 78578)).